Here is a 70-residue protein sequence, read N- to C-terminus: Large ribosomal subunit protein bL28 (70 aa).

The protein belongs to the bacterial ribosomal protein bL28 family.

This Maridesulfovibrio salexigens (strain ATCC 14822 / DSM 2638 / NCIMB 8403 / VKM B-1763) (Desulfovibrio salexigens) protein is Large ribosomal subunit protein bL28.